We begin with the raw amino-acid sequence, 256 residues long: Triosephosphate isomerase (256 aa).

9–11 is a substrate binding site; that stretch reads NWK. The Electrophile role is filled by histidine 97. The active-site Proton acceptor is glutamate 169. Substrate is bound by residues glycine 175, serine 214, and 235 to 236; that span reads GG.

Belongs to the triosephosphate isomerase family. As to quaternary structure, homodimer.

Its subcellular location is the cytoplasm. It carries out the reaction D-glyceraldehyde 3-phosphate = dihydroxyacetone phosphate. It participates in carbohydrate biosynthesis; gluconeogenesis. It functions in the pathway carbohydrate degradation; glycolysis; D-glyceraldehyde 3-phosphate from glycerone phosphate: step 1/1. Involved in the gluconeogenesis. Catalyzes stereospecifically the conversion of dihydroxyacetone phosphate (DHAP) to D-glyceraldehyde-3-phosphate (G3P). The sequence is that of Triosephosphate isomerase from Vibrio vulnificus (strain CMCP6).